The chain runs to 365 residues: 3-dehydroquinate synthase (365 aa).

Residues 72–77 (SGEKEK), 130–131 (TT), Lys142, and Lys151 each bind NAD(+). Residues Glu184, His247, and His264 each coordinate Zn(2+).

Belongs to the sugar phosphate cyclases superfamily. Dehydroquinate synthase family. It depends on Co(2+) as a cofactor. Requires Zn(2+) as cofactor. NAD(+) serves as cofactor.

The protein localises to the cytoplasm. It carries out the reaction 7-phospho-2-dehydro-3-deoxy-D-arabino-heptonate = 3-dehydroquinate + phosphate. Its pathway is metabolic intermediate biosynthesis; chorismate biosynthesis; chorismate from D-erythrose 4-phosphate and phosphoenolpyruvate: step 2/7. Catalyzes the conversion of 3-deoxy-D-arabino-heptulosonate 7-phosphate (DAHP) to dehydroquinate (DHQ). This Bacillus cereus (strain AH187) protein is 3-dehydroquinate synthase.